The chain runs to 880 residues: Alanine--tRNA ligase (880 aa).

Residues His566, His570, Cys668, and His672 each contribute to the Zn(2+) site.

Belongs to the class-II aminoacyl-tRNA synthetase family. Zn(2+) serves as cofactor.

It is found in the cytoplasm. It carries out the reaction tRNA(Ala) + L-alanine + ATP = L-alanyl-tRNA(Ala) + AMP + diphosphate. Functionally, catalyzes the attachment of alanine to tRNA(Ala) in a two-step reaction: alanine is first activated by ATP to form Ala-AMP and then transferred to the acceptor end of tRNA(Ala). Also edits incorrectly charged Ser-tRNA(Ala) and Gly-tRNA(Ala) via its editing domain. The sequence is that of Alanine--tRNA ligase from Nostoc punctiforme (strain ATCC 29133 / PCC 73102).